A 344-amino-acid chain; its full sequence is L-threonine 3-dehydrogenase (344 aa).

Cys42 is a Zn(2+) binding site. Residues Thr44 and His47 each act as charge relay system in the active site. 6 residues coordinate Zn(2+): His67, Glu68, Cys97, Cys100, Cys103, and Cys111. NAD(+)-binding positions include Ile179, Asp199, Arg204, 266–268, and 290–291; these read LGI and IY.

It belongs to the zinc-containing alcohol dehydrogenase family. Homotetramer. Zn(2+) serves as cofactor.

It is found in the cytoplasm. It catalyses the reaction L-threonine + NAD(+) = (2S)-2-amino-3-oxobutanoate + NADH + H(+). The protein operates within amino-acid degradation; L-threonine degradation via oxydo-reductase pathway; glycine from L-threonine: step 1/2. Its function is as follows. Catalyzes the NAD(+)-dependent oxidation of L-threonine to 2-amino-3-ketobutyrate. This Sinorhizobium medicae (strain WSM419) (Ensifer medicae) protein is L-threonine 3-dehydrogenase.